The sequence spans 555 residues: Formate--tetrahydrofolate ligase (555 aa).

65 to 72 (TPAGEGKT) serves as a coordination point for ATP.

The protein belongs to the formate--tetrahydrofolate ligase family.

The catalysed reaction is (6S)-5,6,7,8-tetrahydrofolate + formate + ATP = (6R)-10-formyltetrahydrofolate + ADP + phosphate. The protein operates within one-carbon metabolism; tetrahydrofolate interconversion. This is Formate--tetrahydrofolate ligase from Syntrophomonas wolfei subsp. wolfei (strain DSM 2245B / Goettingen).